Here is a 144-residue protein sequence, read N- to C-terminus: 3-dehydroquinate dehydratase (144 aa).

Residue Tyr23 is the Proton acceptor of the active site. Substrate-binding residues include Asn74, His80, and Asp87. His100 serves as the catalytic Proton donor. Residues Leu101–Ser102 and Arg111 each bind substrate.

It belongs to the type-II 3-dehydroquinase family. In terms of assembly, homododecamer.

The enzyme catalyses 3-dehydroquinate = 3-dehydroshikimate + H2O. It participates in metabolic intermediate biosynthesis; chorismate biosynthesis; chorismate from D-erythrose 4-phosphate and phosphoenolpyruvate: step 3/7. Catalyzes a trans-dehydration via an enolate intermediate. This Haemophilus ducreyi (strain 35000HP / ATCC 700724) protein is 3-dehydroquinate dehydratase.